The chain runs to 260 residues: Ubiquinone/menaquinone biosynthesis C-methyltransferase UbiE (260 aa).

S-adenosyl-L-methionine is bound by residues Thr83, Asp104, and 132–133; that span reads NA.

The protein belongs to the class I-like SAM-binding methyltransferase superfamily. MenG/UbiE family.

It catalyses the reaction a 2-demethylmenaquinol + S-adenosyl-L-methionine = a menaquinol + S-adenosyl-L-homocysteine + H(+). It carries out the reaction a 2-methoxy-6-(all-trans-polyprenyl)benzene-1,4-diol + S-adenosyl-L-methionine = a 5-methoxy-2-methyl-3-(all-trans-polyprenyl)benzene-1,4-diol + S-adenosyl-L-homocysteine + H(+). It functions in the pathway quinol/quinone metabolism; menaquinone biosynthesis; menaquinol from 1,4-dihydroxy-2-naphthoate: step 2/2. Its pathway is cofactor biosynthesis; ubiquinone biosynthesis. In terms of biological role, methyltransferase required for the conversion of demethylmenaquinol (DMKH2) to menaquinol (MKH2) and the conversion of 2-polyprenyl-6-methoxy-1,4-benzoquinol (DDMQH2) to 2-polyprenyl-3-methyl-6-methoxy-1,4-benzoquinol (DMQH2). The sequence is that of Ubiquinone/menaquinone biosynthesis C-methyltransferase UbiE from Bartonella quintana (strain Toulouse) (Rochalimaea quintana).